The following is a 272-amino-acid chain: Phosphate import ATP-binding protein PstB (272 aa).

The 242-residue stretch at 26-267 folds into the ABC transporter domain; sequence LEIRNLDLRY…PKKRKTEDYI (242 aa). Residue 58-65 participates in ATP binding; that stretch reads GPSGCGKS.

The protein belongs to the ABC transporter superfamily. Phosphate importer (TC 3.A.1.7) family. As to quaternary structure, the complex is composed of two ATP-binding proteins (PstB), two transmembrane proteins (PstC and PstA) and a solute-binding protein (PstS).

It localises to the cell inner membrane. The enzyme catalyses phosphate(out) + ATP + H2O = ADP + 2 phosphate(in) + H(+). In terms of biological role, part of the ABC transporter complex PstSACB involved in phosphate import. Responsible for energy coupling to the transport system. This chain is Phosphate import ATP-binding protein PstB, found in Shewanella frigidimarina (strain NCIMB 400).